Here is a 53-residue protein sequence, read N- to C-terminus: Rubredoxin-1 (53 aa).

The 53-residue stretch at 1-53 (MEKFVCDVCGYIYDPVVGDPDNGVAPGTKFKDIPDTWVCPLCKLDKTHFSKVE) folds into the Rubredoxin-like domain. Positions 6, 9, 39, and 42 each coordinate Fe cation.

The protein belongs to the rubredoxin family. Fe(3+) is required as a cofactor.

Rubredoxin is a small nonheme, iron protein lacking acid-labile sulfide. Its single Fe, chelated to 4 Cys, functions as an electron acceptor and may also stabilize the conformation of the molecule. The chain is Rubredoxin-1 (rubR1) from Clostridium perfringens (strain 13 / Type A).